The primary structure comprises 704 residues: Chloride intracellular channel protein 6 (704 aa).

A compositionally biased stretch (low complexity) spans 1 to 13 (MAEAAEPEGVAPG). Residues 1-446 (MAEAAEPEGV…EDGEASEPRA (446 aa)) form a disordered region. The segment covering 39–48 (EGPEGSEGAE) has biased composition (acidic residues). Serine 44 is modified (phosphoserine). Residues 67–83 (RGPEAEARGTRGAHGET) are compositionally biased toward basic and acidic residues. The span at 90 to 100 (PEGAEVPQGGE) shows a compositional bias: low complexity. Residues 121–147 (PRGEAQREPEDSAAPERQEEAEQRPEV) are compositionally biased toward basic and acidic residues. A run of 13 repeats spans residues 157-166 (GDSVDAEGPL), 167-176 (GDNIEAEGPA), 177-186 (GDSVEAEGRV), 187-196 (GDSVDAEGPA), 197-206 (GDSVDAEGPL), 207-216 (GDNIQAEGPA), 217-226 (GDSVDAEGRV), 227-236 (GDSVDAEGPA), 237-246 (GDSVDAEGRV), 247-256 (GDSVEAGDPA), 257-266 (GDGVEAGVPA), 267-276 (GDSVEAEGPA), and 277-286 (GDSMDAEGPA). The 13 X 10 AA tandem repeat of G-D-[SNG]-[VIM]-[DEQ]-A-[EAG]-[GDVE]-[PRG]-[LAVP] stretch occupies residues 157-282 (GDSVDAEGPL…EGPAGDSMDA (126 aa)). Residues 295 to 306 (EPQQSGDGSLSP) show a composition bias toward polar residues. 2 stretches are compositionally biased toward basic and acidic residues: residues 350-360 (ARADAGEDRVG) and 371-385 (EERRERSPEGPREEE). A phosphoserine mark is found at serine 397 and serine 442. The segment covering 434–446 (GRREDGEASEPRA) has biased composition (basic and acidic residues). Residues 487–490 (CPFS) carry the G-site motif. A helical membrane pass occupies residues 489–509 (FSQRLFMILWLKGVIFNVTTV). A GST C-terminal domain is found at 556–704 (YPKLGTQHPE…AYSDVAKRMK (149 aa)).

It belongs to the chloride channel CLIC family. Monomer (soluble state). Interacts with dopamine receptors DRD2, DRD3 and DRD4. In terms of processing, phosphorylated. In terms of tissue distribution, expressed in brain, placenta, pancreas, liver, lung, heart, kidney, liver, spleen, soleus muscle, and brown fat.

The protein localises to the cytoplasm. It localises to the cell membrane. The catalysed reaction is chloride(in) = chloride(out). Channel activity is redox- and pH-regulated. Inhibited by IAA-94. In the soluble state, catalyzes glutaredoxin-like thiol disulfide exchange reactions with reduced glutathione as electron donor. Can insert into membranes and form voltage-dependent chloride-selective channels. The channel opens upon membrane depolarization at positive voltages and closes at negative membrane voltages. May play a critical role in water-secreting cells, possibly through the regulation of chloride ion transport. This chain is Chloride intracellular channel protein 6, found in Homo sapiens (Human).